Here is a 374-residue protein sequence, read N- to C-terminus: Palmitoyltransferase PFA5 (374 aa).

Residues Met-1–Ser-13 lie on the Cytoplasmic side of the membrane. A helical membrane pass occupies residues Trp-14 to Tyr-34. The Lumenal segment spans residues Cys-35–Gly-55. Residues Leu-56 to Ile-76 form a helical membrane-spanning segment. The Cytoplasmic segment spans residues Leu-77–Leu-173. One can recognise a DHHC domain in the interval Ile-129–Ala-179. The chain crosses the membrane as a helical span at residues Phe-174–Val-194. Topologically, residues Tyr-195–Thr-217 are lumenal. A helical transmembrane segment spans residues Leu-218–Tyr-238. Over Met-239 to Tyr-374 the chain is Cytoplasmic.

This sequence belongs to the DHHC palmitoyltransferase family. PFA5 subfamily. Post-translationally, autopalmitoylated.

The protein localises to the membrane. The enzyme catalyses L-cysteinyl-[protein] + hexadecanoyl-CoA = S-hexadecanoyl-L-cysteinyl-[protein] + CoA. The protein is Palmitoyltransferase PFA5 (PFA5) of Saccharomyces cerevisiae (strain ATCC 204508 / S288c) (Baker's yeast).